The sequence spans 416 residues: Enterobactin exporter EntS (416 aa).

At 1–21 (MNKQSWLLNLSLLKTHPAFRA) the chain is on the cytoplasmic side. A helical membrane pass occupies residues 22–42 (VFLARFISIVSLGLLGVAVPV). Topologically, residues 43-55 (QIQMMTHSTWQVG) are periplasmic. The chain crosses the membrane as a helical span at residues 56-76 (LSVTLTGGAMFVGLMVGGVLA). Topologically, residues 77-83 (DRYERKK) are cytoplasmic. A helical membrane pass occupies residues 84–104 (VILLARGTCGIGFIGLCLNAL). Residues 105 to 109 (LPEPS) lie on the Periplasmic side of the membrane. The helical transmembrane segment at 110 to 130 (LLAIYLLGLWDGFFASLGVTA) threads the bilayer. Topologically, residues 131 to 156 (LLAATPALVGRENLMQAGALTMLTVR) are cytoplasmic. A helical transmembrane segment spans residues 157–177 (LGSVISPMIGGLLLATGGVAW). A topological domain (periplasmic) is located at residue Asn178. A helical transmembrane segment spans residues 179-199 (YGLAAAGTFITLLPLLSLPAL). Residues 200 to 218 (PPPPQPREHPLKSLLAGFR) lie on the Cytoplasmic side of the membrane. Residues 219–239 (FLLASPLVGGIALLGGLLTMA) traverse the membrane as a helical segment. At 240 to 256 (SAVRVLYPALADNWQMS) the chain is on the periplasmic side. A helical transmembrane segment spans residues 257-277 (AAEIGFLYAAIPLGAAIGALT). Topologically, residues 278-287 (SGKLAHSARP) are cytoplasmic. Residues 288–307 (GLLMLLSTLGSFLAIGLFGL) traverse the membrane as a helical segment. At 308–313 (MPMWIL) the chain is on the periplasmic side. Residues 314–336 (GVVCLALFGWLSAVSSLLQYTML) traverse the membrane as a helical segment. Residues 337-356 (QTQTPEAMLGRINGLWTAQN) lie on the Cytoplasmic side of the membrane. The chain crosses the membrane as a helical span at residues 357-377 (VTGDAIGAALLGGLGAMMTPV). Ala378 is a topological domain (periplasmic). Residues 379–399 (SASASGFGLLIIGVLLLLVLV) traverse the membrane as a helical segment. Residues 400 to 416 (ELRRFRQTPPQVTASDS) lie on the Cytoplasmic side of the membrane.

It belongs to the major facilitator superfamily. EntS (TC 2.A.1.38) family.

The protein resides in the cell inner membrane. Component of an export pathway for enterobactin. The polypeptide is Enterobactin exporter EntS (Shigella boydii serotype 18 (strain CDC 3083-94 / BS512)).